Reading from the N-terminus, the 381-residue chain is Cyclic AMP-AMP-GMP synthase (381 aa).

Positions 51, 53, 56, 69, 71, and 109 each coordinate ATP. Catalysis depends on residues D69 and D71. The Mg(2+) site is built by D69 and D71. D121 is a catalytic residue. Mg(2+)-binding residues include D121 and D196. Positions 196, 197, 204, 205, 210, 233, and 250 each coordinate ATP. Residues N258 and L260 each contribute to the Mg(2+) site. 2 residues coordinate ATP: V304 and R307. Residues 348 to 381 are disordered; sequence GSKFPLPGPQGGDRNGGFTTPSKPAEPQKTGRFA.

It belongs to the CD-NTase family. D02 subfamily. As to quaternary structure, monomer. Crystallizes as a Cap2 homodimer bound on each side by a CdnD monomer. Mg(2+) serves as cofactor. Post-translationally, in bacteria expressing cap4-dncV-cap2-cap3, this protein is conjugated to a number of other proteins by Cap2, probably via this protein's C-terminal Ala residue. More conjugated DncV is found in the absence of Cap3.

It catalyses the reaction GTP + 2 ATP = 3',3',3'-cAAG + 3 diphosphate. With respect to regulation, primed for activation by Cap2 which conjugates it to cellular proteins; activation is target protein-specific (green fluorescent protein does not activate the enzyme), but which protein(s) activate it is unclear. In terms of biological role, cyclic nucleotide synthase (second messenger synthase) of a CBASS antivirus system. CBASS (cyclic oligonucleotide-based antiphage signaling system) provides immunity against bacteriophages. The CD-NTase protein (CdnD, this protein) synthesizes cyclic nucleotides in response to infection; these serve as specific second messenger signals. The signals activate a diverse range of effectors, leading to bacterial cell death and thus abortive phage infection. A type II-C(AAG) CBASS system. Cyclic trinucleotide synthase that catalyzes the synthesis of 3',3',3'-cyclic AMP-AMP-GMP (cAAG) as the major product, a second messenger for cell signal transduction. Uses ATP as the first donor nucleotide, followed by GTP. Functionally, protects E.coli against phage T2 infection. When the cdnD-cap2-cap3-cap4 operon is introduced in E.coli there is a more than 10(3) decrease in the efficiency of T2 plaque formation. The operon does not protect against phage T5 and only about 10-fold against T7. Expression of cdnD-cap4 alone protects E.coli against phage T2 infection. This chain is Cyclic AMP-AMP-GMP synthase, found in Enterobacter hormaechei subsp. hoffmannii (strain UCI 50).